A 208-amino-acid polypeptide reads, in one-letter code: GTP cyclohydrolase 1 (208 aa).

Zn(2+) is bound by residues cysteine 98, histidine 101, and cysteine 169.

It belongs to the GTP cyclohydrolase I family. As to quaternary structure, toroid-shaped homodecamer, composed of two pentamers of five dimers.

The catalysed reaction is GTP + H2O = 7,8-dihydroneopterin 3'-triphosphate + formate + H(+). It functions in the pathway cofactor biosynthesis; 7,8-dihydroneopterin triphosphate biosynthesis; 7,8-dihydroneopterin triphosphate from GTP: step 1/1. The sequence is that of GTP cyclohydrolase 1 from Agrobacterium fabrum (strain C58 / ATCC 33970) (Agrobacterium tumefaciens (strain C58)).